A 121-amino-acid polypeptide reads, in one-letter code: Small ribosomal subunit protein uS11 (121 aa).

Belongs to the universal ribosomal protein uS11 family. As to quaternary structure, part of the 30S ribosomal subunit. Interacts with proteins S7 and S18. Binds to IF-3.

Its function is as follows. Located on the platform of the 30S subunit, it bridges several disparate RNA helices of the 16S rRNA. Forms part of the Shine-Dalgarno cleft in the 70S ribosome. The polypeptide is Small ribosomal subunit protein uS11 (Mycoplasma genitalium (strain ATCC 33530 / DSM 19775 / NCTC 10195 / G37) (Mycoplasmoides genitalium)).